The sequence spans 283 residues: Serine protease 57 (283 aa).

An N-terminal signal peptide occupies residues 1 to 31; the sequence is MGLGLRGWGRPLLTVATALMLPVKPPAGSWG. Residues 34–263 enclose the Peptidase S1 domain; it reads IIGGHEVTPH…FVAWIWDVVR (230 aa). A disulfide bridge connects residues cysteine 59 and cysteine 75. Catalysis depends on charge relay system residues histidine 74 and aspartate 122. Asparagine 129 and asparagine 189 each carry an N-linked (GlcNAc...) asparagine glycan. Disulfide bonds link cysteine 157-cysteine 224, cysteine 188-cysteine 202, and cysteine 214-cysteine 239. Residue serine 218 is the Charge relay system of the active site.

Belongs to the peptidase S1 family. In terms of processing, after cleavage of the signal peptide, the N-terminus is probably further processed by CTSC. Processing by CTSC is probably required for accumulation in cytoplasmic granules; in the absence of CTSC the protein does not accumulate. Post-translationally, N-glycosylated. Detected in peripheral blood neutrophil granulocytes, but not in other types of leukocytes. Detected in neutrophils and neutrophil precursors in bone marrow (at protein level). Detected in myeloblasts and promyelocytes in bone marrow.

The protein resides in the cytoplasmic granule lumen. Its subcellular location is the secreted. With respect to regulation, inhibited by SERPINA1, SERPINC1 and SERPING1. In terms of biological role, serine protease that cleaves preferentially after Arg residues. Can also cleave after citrulline (deimidated arginine) and methylarginine residues. The sequence is that of Serine protease 57 (PRSS57) from Homo sapiens (Human).